The primary structure comprises 311 residues: CAAX prenyl protease 2 (311 aa).

3 helical membrane-spanning segments follow: residues 14–34, 51–71, and 94–114; these read VATC…PTVI, FICA…ILPI, and VVYP…LKLF. Glu164 (proton donor/acceptor) is an active-site residue. A helical transmembrane segment spans residues 173-193; sequence IPLLLCAGFRINTAIFLCPVL. The Proton donor/acceptor role is filled by His198. 3 consecutive transmembrane segments (helical) span residues 219-239, 244-264, and 268-288; these read IVGL…FLFI, LAAP…VLYA, and GLVS…LFPL.

It belongs to the peptidase U48 family. As to expression, expressed in seeds, stems, leaves, flowers and siliques.

Its subcellular location is the endoplasmic reticulum membrane. The enzyme catalyses Hydrolyzes the peptide bond -P2-(S-farnesyl or geranylgeranyl)C-P1'-P2'-P3'-COOH where P1' and P2' are amino acids with aliphatic sidechains and P3' is any C-terminal residue.. Its activity is regulated as follows. Inhibited in vitro by L-1-tosylamido-2-phenylethyl chloromethyl ketone (TPCK) and N-ethylmaleimide, but not by EDTA. Protease involved in the processing of a variety of prenylated proteins containing the C-terminal CAAX motif, where C is a cysteine modified with an isoprenoid lipid, A is an aliphatic amino acid and X is any C-terminal amino acid. Proteolytically removes the C-terminal three residues of farnesylated and geranylated proteins, leaving the prenylated cysteine as the new C-terminus. The substrate specificity is only partially overlapping with that of FACE1. CAAX processing is likely required for subcellular targeting of prenylated proteins to the plasma membrane. The protein is CAAX prenyl protease 2 (FACE2) of Arabidopsis thaliana (Mouse-ear cress).